A 911-amino-acid polypeptide reads, in one-letter code: Valine--tRNA ligase (911 aa).

The 'HIGH' region motif lies at 53–63 (PNVTGTLHLGH). The 'KMSKS' region signature appears at 533 to 537 (KMSKS). Lys-536 is an ATP binding site. Residues 845 to 910 (KEIERLTKEL…NRLAMLRSMQ (66 aa)) are a coiled coil.

The protein belongs to the class-I aminoacyl-tRNA synthetase family. ValS type 1 subfamily. In terms of assembly, monomer.

The protein localises to the cytoplasm. The catalysed reaction is tRNA(Val) + L-valine + ATP = L-valyl-tRNA(Val) + AMP + diphosphate. Its function is as follows. Catalyzes the attachment of valine to tRNA(Val). As ValRS can inadvertently accommodate and process structurally similar amino acids such as threonine, to avoid such errors, it has a 'posttransfer' editing activity that hydrolyzes mischarged Thr-tRNA(Val) in a tRNA-dependent manner. This chain is Valine--tRNA ligase, found in Symbiobacterium thermophilum (strain DSM 24528 / JCM 14929 / IAM 14863 / T).